Here is a 362-residue protein sequence, read N- to C-terminus: P2Y purinoceptor 1 (362 aa).

Residues 1–40 lie on the Extracellular side of the membrane; that stretch reads MTEALISAALNGTQPELLAGGWAAGNATTKCSLTKTGFQF. Residues N11 and N26 are each glycosylated (N-linked (GlcNAc...) asparagine). 2 disulfides stabilise this stretch: C31/C285 and C113/C191. K35 is an ADP binding site. A helical transmembrane segment spans residues 41–63; the sequence is YYLPTVYILVFITGFLGNSVAIW. The Cytoplasmic portion of the chain corresponds to 64–76; the sequence is MFVFHMRPWSGIS. Residues 77 to 98 traverse the membrane as a helical segment; that stretch reads VYMFNLALADFLYVLTLPALIF. Over 99 to 114 the chain is Extracellular; sequence YYFNKTDWIFGDVMCK. Residue N102 is glycosylated (N-linked (GlcNAc...) asparagine). The helical transmembrane segment at 115 to 136 threads the bilayer; it reads LQRFIFHVNLYGSILFLTCISV. The Cytoplasmic portion of the chain corresponds to 137 to 155; it reads HRYTGVVHPLKSLGRLKKK. Residues 156–177 form a helical membrane-spanning segment; it reads NAVYVSSLVWALVVAVIAPILF. At 178 to 203 the chain is on the extracellular side; it reads YSGTGVRRNKTITCYDTTADEYLRSY. N-linked (GlcNAc...) asparagine glycosylation is present at N186. ADP is bound at residue 192–194; that stretch reads YDT. Residues 204–226 form a helical membrane-spanning segment; the sequence is FVYSMCTTVFMFCIPFIVILGCY. Over 227–249 the chain is Cytoplasmic; it reads GLIVKALIYKDLDNSPLRRKSIY. The chain crosses the membrane as a helical span at residues 250–273; sequence LVIIVLTVFAVSYLPFHVMKTLNL. ADP contacts are provided by residues 272–276, 292–295, and R299; these read NLRAR and YATY. Topologically, residues 274–292 are extracellular; that stretch reads RARLDFQTPQMCAFNDKVY. A helical membrane pass occupies residues 293 to 314; that stretch reads ATYQVTRGLASLNSCVDPILYF. Topologically, residues 315 to 362 are cytoplasmic; it reads LAGDTFRRRLSRATRKSSRRSEPNVQSKSEEMTLNILTEYKQNGDTSL.

Belongs to the G-protein coupled receptor 1 family. As to expression, brain, spinal cord, gastrointestinal tract, spleen and leg muscle. Is not detected in the heart, liver, stomach, lung and kidney.

Its subcellular location is the cell membrane. Its function is as follows. Receptor for extracellular adenine nucleotides such as ADP. In platelets, binding to ADP leads to mobilization of intracellular calcium ions via activation of phospholipase C, a change in platelet shape, and ultimately platelet aggregation. This is P2Y purinoceptor 1 (P2RY1) from Gallus gallus (Chicken).